Consider the following 276-residue polypeptide: Undecaprenyl-diphosphatase 1 (276 aa).

6 helical membrane-spanning segments follow: residues 43–63, 85–105, 109–129, 184–204, 214–234, and 254–274; these read RAMA…VWEF, ANLL…ADLI, LFNP…MLWA, ATEF…VYSG, ADFP…MIAV, and IVFG…WTAA.

This sequence belongs to the UppP family.

The protein resides in the cell inner membrane. The catalysed reaction is di-trans,octa-cis-undecaprenyl diphosphate + H2O = di-trans,octa-cis-undecaprenyl phosphate + phosphate + H(+). In terms of biological role, catalyzes the dephosphorylation of undecaprenyl diphosphate (UPP). Confers resistance to bacitracin. The chain is Undecaprenyl-diphosphatase 1 from Pseudomonas fluorescens (strain Pf0-1).